Reading from the N-terminus, the 118-residue chain is Large ribosomal subunit protein bL20 (118 aa).

It belongs to the bacterial ribosomal protein bL20 family.

In terms of biological role, binds directly to 23S ribosomal RNA and is necessary for the in vitro assembly process of the 50S ribosomal subunit. It is not involved in the protein synthesizing functions of that subunit. This is Large ribosomal subunit protein bL20 from Ralstonia nicotianae (strain ATCC BAA-1114 / GMI1000) (Ralstonia solanacearum).